The following is a 310-amino-acid chain: Tagatose-6-phosphate kinase (310 aa).

It belongs to the carbohydrate kinase PfkB family. LacC subfamily.

The catalysed reaction is D-tagatofuranose 6-phosphate + ATP = D-tagatofuranose 1,6-bisphosphate + ADP + H(+). The protein operates within carbohydrate metabolism; D-tagatose 6-phosphate degradation; D-glyceraldehyde 3-phosphate and glycerone phosphate from D-tagatose 6-phosphate: step 1/2. This chain is Tagatose-6-phosphate kinase, found in Streptococcus mutans serotype c (strain ATCC 700610 / UA159).